A 223-amino-acid chain; its full sequence is Fibroblast growth factor-binding protein 2 (223 aa).

Residues 1 to 19 (MKFVPCLLLVTLSCLGTLG) form the signal peptide. Residues 23–45 (RQKQGSTGEEFHFQTGGRDSCTM) are disordered. 3 cysteine pairs are disulfide-bonded: Cys-43/Cys-63, Cys-72/Cys-106, and Cys-81/Cys-117. The segment at 120–201 (AGPQAHMQQV…PGGNEEAKKK (82 aa)) is disordered. Polar residues predominate over residues 125-144 (HMQQVTSSLKGSPEPNQQPE). Residues 175–186 (AKPTTRPTAKPT) are compositionally biased toward low complexity. A disulfide bond links Cys-206 and Cys-214.

This sequence belongs to the fibroblast growth factor-binding protein family. Expressed in serum, peripheral leukocytes and cytotoxic T-lymphocytes, but not in granulocytes and monocytes (at protein level).

The protein localises to the secreted. The protein resides in the extracellular space. This Homo sapiens (Human) protein is Fibroblast growth factor-binding protein 2 (FGFBP2).